Here is a 359-residue protein sequence, read N- to C-terminus: 3-dehydroquinate synthase (359 aa).

NAD(+) is bound by residues 71–76, 105–109, 129–130, lysine 142, and lysine 151; these read DGEAYK, GVIGD, and TT. Glutamate 184, histidine 247, and histidine 264 together coordinate Zn(2+).

This sequence belongs to the sugar phosphate cyclases superfamily. Dehydroquinate synthase family. It depends on Co(2+) as a cofactor. Requires Zn(2+) as cofactor. NAD(+) is required as a cofactor.

It is found in the cytoplasm. The enzyme catalyses 7-phospho-2-dehydro-3-deoxy-D-arabino-heptonate = 3-dehydroquinate + phosphate. Its pathway is metabolic intermediate biosynthesis; chorismate biosynthesis; chorismate from D-erythrose 4-phosphate and phosphoenolpyruvate: step 2/7. Its function is as follows. Catalyzes the conversion of 3-deoxy-D-arabino-heptulosonate 7-phosphate (DAHP) to dehydroquinate (DHQ). This Burkholderia multivorans (strain ATCC 17616 / 249) protein is 3-dehydroquinate synthase.